The chain runs to 507 residues: RNA-splicing ligase RtcB homolog (507 aa).

5 residues coordinate Mn(2+): Asp-121, Cys-124, His-229, His-261, and His-355. Residue 228–232 participates in GMP binding; sequence NHYAE. GMP contacts are provided by residues 355–356, 404–407, Ser-411, 430–433, and Lys-506; these read HN, GGTM, and HGAG. Residue His-430 is the GMP-histidine intermediate of the active site.

The protein belongs to the RtcB family. In terms of assembly, catalytic component of the tRNA-splicing ligase complex. Mn(2+) serves as cofactor.

The catalysed reaction is a 3'-end 3'-phospho-ribonucleotide-RNA + a 5'-end dephospho-ribonucleoside-RNA + GTP = a ribonucleotidyl-ribonucleotide-RNA + GMP + diphosphate. It carries out the reaction a 3'-end 2',3'-cyclophospho-ribonucleotide-RNA + a 5'-end dephospho-ribonucleoside-RNA + GTP + H2O = a ribonucleotidyl-ribonucleotide-RNA + GMP + diphosphate + H(+). In terms of biological role, catalytic subunit of the tRNA-splicing ligase complex that acts by directly joining spliced tRNA halves to mature-sized tRNAs by incorporating the precursor-derived splice junction phosphate into the mature tRNA as a canonical 3',5'-phosphodiester. May act as an RNA ligase with broad substrate specificity, and may function toward other RNAs. The chain is RNA-splicing ligase RtcB homolog from Branchiostoma floridae (Florida lancelet).